The following is a 525-amino-acid chain: Polyamine aminopropyltransferase 1 (525 aa).

Helical transmembrane passes span 21-41 (ALLV…ELIA), 53-73 (ILQF…GSWV), 89-109 (LELL…LLFA), 117-137 (LVLY…IPLV), 155-175 (VLTF…LVLA), and 180-200 (LVRT…WTLW). Positions 220-464 (AGMVGAALLA…GEWGFILAAP (245 aa)) constitute a PABS domain. The spermidine synthase stretch occupies residues 222 to 471 (MVGAALLAGF…AAPGRADFRP (250 aa)). Position 259 (Q259) interacts with S-methyl-5'-thioadenosine. H289 and D313 together coordinate spermidine. S-methyl-5'-thioadenosine is bound by residues D333 and 367 to 368 (DA). D385 acts as the Proton acceptor in catalysis.

This sequence belongs to the spermidine/spermine synthase family. Homodimer or homotetramer.

It localises to the cell membrane. The catalysed reaction is S-adenosyl 3-(methylsulfanyl)propylamine + putrescine = S-methyl-5'-thioadenosine + spermidine + H(+). Its pathway is amine and polyamine biosynthesis; spermidine biosynthesis; spermidine from putrescine: step 1/1. Catalyzes the irreversible transfer of a propylamine group from the amino donor S-adenosylmethioninamine (decarboxy-AdoMet) to putrescine (1,4-diaminobutane) to yield spermidine. The chain is Polyamine aminopropyltransferase 1 from Ralstonia nicotianae (strain ATCC BAA-1114 / GMI1000) (Ralstonia solanacearum).